We begin with the raw amino-acid sequence, 3021 residues long: Genome polyprotein (3021 aa).

Residue serine 2 is modified to N-acetylserine; by host. The tract at residues 2–23 is interaction with STAT1; that stretch reads STLPKPQRKTKRNTIRRPQDVK. An interaction with EIF2AK2/PKR region spans residues 2–58; sequence STLPKPQRKTKRNTIRRPQDVKFPGGGQIVGGVYVLPRRGPRLGVRATRKTSERSQP. An interaction with DDX3X region spans residues 2–59; the sequence is STLPKPQRKTKRNTIRRPQDVKFPGGGQIVGGVYVLPRRGPRLGVRATRKTSERSQPR. Residues 2-75 form a disordered region; the sequence is STLPKPQRKT…PKARRSEGRS (74 aa). Over 2-168 the chain is Cytoplasmic; that stretch reads STLPKPQRKT…EDGINFATGN (167 aa). Short sequence motifs (nuclear localization signal) lie at residues 5-13 and 38-43; these read PKPQRKTKR and PRRGPR. Positions 7 to 16 are enriched in basic residues; the sequence is PQRKTKRNTI. Serine 53 is modified (phosphoserine; by host). 2 consecutive short sequence motifs (nuclear localization signal) follow at residues 58-64 and 66-71; these read PRGRRQP and PKARRS. The span at 58-68 shows a compositional bias: basic residues; sequence PRGRRQPIPKA. Serine 99 carries the phosphoserine; by host modification. Residues 112 to 152 form an important for endoplasmic reticulum and mitochondrial localization region; the sequence is PRRRSRNLGKVIDTLTCGFADLMGYIPLVGAPVGGVARALA. Phosphoserine; by host PKA is present on serine 116. Residues 122–173 form an interaction with APOA2 region; that stretch reads VIDTLTCGFADLMGYIPLVGAPVGGVARALAHGVRALEDGINFATGNLPGCS. The important for lipid droplets localization stretch occupies residues 164 to 167; it reads FATG. Residues 169–189 form a helical membrane-spanning segment; the sequence is LPGCSFSIFLLALFSCLIHPA. A propeptide spans 178–191 (ER anchor for the core protein, removed in mature form by host signal peptidase); that stretch reads LLALFSCLIHPAAS. Residues 190–358 are Lumenal-facing; it reads ASLEWRNTSG…AGAHWGILAG (169 aa). N-linked (GlcNAc...) asparagine; by host glycosylation is found at asparagine 196, asparagine 209, and asparagine 234. An important for fusion region spans residues 265–296; sequence LVGAATMCSALYVGDMCGAVFLVGQAFTFRPR. A glycan (N-linked (GlcNAc...) asparagine; by host) is linked at asparagine 305. Residues 359–379 traverse the membrane as a helical segment; the sequence is LAYYSMQGNWAKVAIIMVMFS. Topologically, residues 380–731 are lumenal; the sequence is GVDAHTYTTG…WEFVILVFLL (352 aa). Positions 385–412 are HVR1; sequence TYTTGGTASRHTQAFAGLFDIGPQQKLQ. N-linked (GlcNAc...) (high mannose) asparagine; by host glycosylation is found at asparagine 417, asparagine 423, and asparagine 430. Cystine bridges form between cysteine 429–cysteine 553, cysteine 452–cysteine 459, cysteine 487–cysteine 495, and cysteine 504–cysteine 509. Asparagine 448 is a glycosylation site (N-linked (GlcNAc...) asparagine; by host). Positions 474–479 are HVR2; the sequence is DANITG. Asparagine 476 carries N-linked (GlcNAc...) asparagine; by host glycosylation. Positions 481–494 are CD81-binding 1; it reads SDDRPYCWHYAPRP. N-linked (GlcNAc...) asparagine; by host glycosylation is present at asparagine 533. Residues 545–552 are CD81-binding 2; that stretch reads PPSGRWFG. N-linked (GlcNAc...) asparagine; by host glycosylation is present at asparagine 557. Cysteine 565 and cysteine 570 are oxidised to a cystine. N-linked (GlcNAc...) asparagine; by host glycosylation is present at asparagine 578. Disulfide bonds link cysteine 587–cysteine 591, cysteine 603–cysteine 626, and cysteine 613–cysteine 650. N-linked (GlcNAc...) (high mannose) asparagine; by host glycosylation is present at asparagine 651. Residues cysteine 658 and cysteine 683 are joined by a disulfide bond. The segment at 666-677 is PKR/eIF2-alpha phosphorylation homology domain (PePHD); that stretch reads SEQHPLLHSTTE. The chain crosses the membrane as a helical span at residues 732–752; it reads LADARVCVALWLMLMISQTEA. The Lumenal segment spans residues 753–763; sequence ALENLVTLNAV. The helical transmembrane segment at 764 to 784 threads the bilayer; the sequence is AAAGTHGIGWYLVAFCAAWYV. Residues 785 to 787 lie on the Cytoplasmic side of the membrane; the sequence is RGK. A helical membrane pass occupies residues 788-809; the sequence is LVPLVTYSLTGLWSLALLVLLL. At 810-819 the chain is on the lumenal side; it reads PQRAYAWSGE. The chain crosses the membrane as a helical span at residues 820–840; it reads DSATLGAGVLVLFGFFTLSPW. Topologically, residues 841-844 are cytoplasmic; sequence YKHW. Residues 845–864 traverse the membrane as a helical segment; the sequence is IGRLMWWNQYTICRCESALH. Over 865–887 the chain is Lumenal; sequence VWVPPLLARGSRDGVILLTSLLY. The chain crosses the membrane as a helical span at residues 888 to 908; the sequence is PSLIFDITKLLMAVLGPLYLI. The region spanning 905–1032 is the Peptidase C18 domain; that stretch reads LYLIQATITT…DYREMGWRLL (128 aa). Residues 909-1663 are Cytoplasmic-facing; that stretch reads QATITTTPYF…CMSADLEVTT (755 aa). Residues 910–1212 are protease NS2-3; that stretch reads ATITTTPYFV…PVETLSTQAR (303 aa). A lipid anchor (S-palmitoyl cysteine; by host) is attached at cysteine 928. Positions 935-955 are interaction with host SCPS1; that stretch reads IGGKYFQMIILSIGRWFNTYL. Residues histidine 958, glutamate 978, and cysteine 999 each act as for protease NS2 activity; shared with dimeric partner in the active site. Positions 1033 to 1214 constitute a Peptidase S29 domain; that stretch reads APITAYAQQT…ETLSTQARSP (182 aa). Active-site charge relay system; for serine protease NS3 activity residues include histidine 1089 and aspartate 1113. Zn(2+)-binding residues include cysteine 1129 and cysteine 1131. Serine 1171 functions as the Charge relay system; for serine protease NS3 activity in the catalytic mechanism. Zn(2+) contacts are provided by cysteine 1177 and histidine 1181. Positions 1223 to 1375 constitute a Helicase ATP-binding domain; it reads PAVPQSYQVG…SNIEEVALGS (153 aa). Position 1236–1243 (1236–1243) interacts with ATP; that stretch reads APTGSGKS. Mg(2+)-binding residues include serine 1243 and glutamate 1323. The DECH box signature appears at 1322 to 1325; it reads DECH. The region spanning 1382–1544 is the Helicase C-terminal domain; it reads YGKAIPIALL…DLQPAETTVR (163 aa). The RNA-binding stretch occupies residues 1492-1504; it reads QRRGRTGRGRLGT. Residues 1664–1684 form a helical membrane-spanning segment; sequence STWVLLGGVLAALAAYCLSVG. Positions 1685 to 1696 are NS3-binding; sequence CVVIVGHIELEG. Over 1685–1811 the chain is Cytoplasmic; sequence CVVIVGHIEL…SVTSPLTTNQ (127 aa). The helical transmembrane segment at 1812–1830 threads the bilayer; it reads TMFFNILGGWVATHLAGPQ. The Lumenal portion of the chain corresponds to 1831 to 1834; that stretch reads SSSA. A helical transmembrane segment spans residues 1835-1855; sequence FVVSGLAGAAIGGIGLGRVLL. Aspartate 1856 is a topological domain (cytoplasmic). The chain crosses the membrane as a helical span at residues 1857-1877; sequence ILAGYGAGVSGALVAFKIMGG. Topologically, residues 1878–1887 are lumenal; that stretch reads ECPTAEDMVN. The helical transmembrane segment at 1888-1908 threads the bilayer; sequence LLPAILSPGALVVGVICAAIL. Residues 1909–1978 are Cytoplasmic-facing; the sequence is RRHVGPGEGA…WINEDYPSPC (70 aa). Residue cysteine 1978 is the site of S-palmitoyl cysteine; by host attachment. Residues 1979 to 2008 lie within the membrane without spanning it; it reads SDDWLRTIWDWVCSVLADFKAWLSAKIMPA. At 2009 to 3000 the chain is on the cytoplasmic side; that stretch reads LPGLPFISCQ…YHSVSRARTR (992 aa). Zn(2+) is bound by residues cysteine 2017, cysteine 2035, cysteine 2037, and cysteine 2058. The interval 2126–2214 is FKBP8-binding; the sequence is EFFTEVDGVR…ASSSASQLSA (89 aa). Residues 2126–2338 are transcriptional activation; that stretch reads EFFTEVDGVR…PVPPPRRKRT (213 aa). The interval 2141–2145 is interaction with non-structural protein 4A; the sequence is PPCKP. Residues 2193–2215 form a disordered region; it reads ARRLARGSPPSEASSSASQLSAP. The segment at 2195–2448 is interaction with host SKP2; sequence RLARGSPPSE…ALITPCSAEE (254 aa). Serine 2200, serine 2203, serine 2207, serine 2210, serine 2213, and serine 2216 each carry phosphoserine; by host. Residues 2200-2215 are compositionally biased toward low complexity; sequence SPPSEASSSASQLSAP. Residues 2216 to 2255 form an ISDR region; the sequence is SLKATCQTHRPHPDAELVDANLLWRQEMGSNITRVESETK. The interaction with EIF2AK2/PKR stretch occupies residues 2216–2281; it reads SLKATCQTHR…VEPSVAAECF (66 aa). Residues 2255 to 2312 form an NS4B-binding region; it reads KVVVLDSFEPLRAETDDVEPSVAAECFKKPPKYPPALPIWARPDYNPPLLDRWKAPDY. Residues 2305 to 2387 form a V3 region; the sequence is DRWKAPDYVP…STTSKVPPSP (83 aa). The short motif at 2328 to 2331 is the SH3-binding element; the sequence is PPVP. The short motif at 2333–2341 is the Nuclear localization signal element; it reads PRRKRTIQL. A Glycyl lysine isopeptide (Lys-Gly) (interchain with G-Cter in ubiquitin) cross-link involves residue lysine 2356. The tract at residues 2356–2417 is disordered; that stretch reads KSFPSSKPQE…DPDLSCDSWS (62 aa). Composition is skewed to low complexity over residues 2359-2381 and 2388-2401; these read PSSK…STTS and GGES…SMPP. Phosphoserine; by host occurs at positions 2459 and 2472. The 119-residue stretch at 2644–2762 folds into the RdRp catalytic domain; it reads PLGFSYDTRC…VAESDGVDED (119 aa). Residues aspartate 2650, aspartate 2748, and aspartate 2749 each coordinate Mg(2+). The chain crosses the membrane as a helical span at residues 3001–3021; that stretch reads HLLLCLLLLTVGVGIFLLPAR.

Belongs to the hepacivirus polyprotein family. In terms of assembly, homooligomer. Interacts with E1 (via C-terminus). Interacts with the non-structural protein 5A. Interacts (via N-terminus) with host STAT1 (via SH2 domain); this interaction results in decreased STAT1 phosphorylation and ubiquitin-mediated proteasome-dependent STAT1 degradation, leading to decreased IFN-stimulated gene transcription. Interacts with host STAT3; this interaction constitutively activates STAT3. Interacts with host LTBR receptor. Interacts with host TNFRSF1A receptor and possibly induces apoptosis. Interacts with host HNRPK. Interacts with host YWHAE. Interacts with host UBE3A/E6AP. Interacts with host DDX3X. Interacts with host APOA2. Interacts with host RXRA protein. Interacts with host SP110 isoform 3/Sp110b; this interaction sequesters the transcriptional corepressor SP110 away from the nucleus. Interacts with host CREB3 nuclear transcription protein; this interaction triggers cell transformation. Interacts with host ACY3. Interacts with host C1QR1. Interacts with host RBM24; this interaction, which enhances the interaction of the mature core protein with 5'-UTR, may inhibit viral translation and favor replication. Interacts with host EIF2AK2/PKR; this interaction induces the autophosphorylation of EIF2AK2. Part of the viral assembly initiation complex composed of NS2, E1, E2, NS3, NS4A, NS5A and the mature core protein. As to quaternary structure, forms a heterodimer with envelope glycoprotein E2. Interacts with mature core protein. Interacts with protease NS2. The heterodimer E1/E2 interacts with host CLDN1; this interaction plays a role in viral entry into host cell. Interacts with host SPSB2 (via C-terminus). Part of the viral assembly initiation complex composed of NS2, E1, E2, NS3, NS4A, NS5A and the mature core protein. Interacts with host NEURL3; this interaction prevents E1 binding to glycoprotein E2. Forms a heterodimer with envelope glycoprotein E1. Interacts with host CD81 and SCARB1 receptors; these interactions play a role in viral entry into host cell. Interacts with host EIF2AK2/PKR; this interaction inhibits EIF2AK2 and probably allows the virus to evade the innate immune response. Interacts with host CD209/DC-SIGN and CLEC4M/DC-SIGNR. Interact with host SPCS1; this interaction is essential for viral particle assembly. Interacts with protease NS2. The heterodimer E1/E2 interacts with host CLDN1; this interaction plays a role in viral entry into host cell. Part of the viral assembly initiation complex composed of NS2, E1, E2, NS3, NS4A, NS5A and the mature core protein. Interacts with host SLC3A2/4F2hc; the interaction may facilitate viral entry into host cell. Interacts with human PLSCR1. In terms of assembly, homohexamer. Homoheptamer. Interacts with protease NS2. As to quaternary structure, homodimer. Interacts with host SPCS1; this interaction is essential for viral particle assembly. Interacts with envelope glycoprotein E1. Interacts with envelope glycoprotein E2. Interacts with viroporin p7. Interacts with serine protease/helicase NS3. Part of the replication complex composed of NS2, NS3, NS4A, NS4B, NS5A and the RNA-directed RNA polymerase embedded in an ER-derived membranous web. Part of the viral assembly initiation complex composed of NS2, E1, E2, NS3, NS4A, NS5A and the mature core protein. Interacts with protease NS2. Interacts with non-structural protein 4A; this interaction stabilizes the folding of NS3 serine protease. NS3-NS4A interaction is essential for NS3 activation and allows membrane anchorage of the latter. NS3/NS4A complex also prevents phosphorylation of host IRF3, thus preventing the establishment of dsRNA induced antiviral state. Interacts with host MAVS; this interaction leads to the cleavage and inhibition of host MAVS. Interacts with host TICAM1; this interaction leads to the cleavage and inhibition of host TICAM1. Interacts with host TANK-binding kinase/TBK1; this interaction results in the inhibition of the association between TBK1 and IRF3, which leads to the inhibition of IRF3 activation. Interacts with host RBM24. Part of the replication complex composed of NS2, NS3, NS4A, NS4B, NS5A and the RNA-directed RNA polymerase embedded in an ER-derived membranous web. Part of the viral assembly initiation complex composed of NS2, E1, E2, NS3, NS4A, NS5A and the mature core protein. In terms of assembly, interacts with NS3 serine protease; this interaction stabilizes the folding of NS3 serine protease. NS3-NS4A interaction is essential for NS3 activation and allows membrane anchorage of the latter. Interacts with non-structural protein 5A (via N-terminus). Part of the replication complex composed of NS2, NS3, NS4A, NS4B, NS5A and the RNA-directed RNA polymerase embedded in an ER-derived membranous web. Part of the viral assembly initiation complex composed of NS2, E1, E2, NS3, NS4A, NS5A and the mature core protein. As to quaternary structure, homomultimer. Interacts with non-structural protein NS5A. Interacts with host PLA2G4C; this interaction likely initiates the recruitment of replication complexes to lipid droplets. Interacts with host STING; this interaction disrupts the interaction between STING and TBK1 thereby suppressing the interferon signaling. Part of the replication complex composed of NS2, NS3, NS4A, NS4B, NS5A and the RNA-directed RNA polymerase embedded in an ER-derived membranous web. Monomer. Homodimer; dimerization is required for RNA-binding. Interacts with the mature core protein. Interacts (via N-terminus) with non-structural protein 4A. Interacts with non-structural protein 4B. Interacts (via region D2) with RNA-directed RNA polymerase. Part of the viral assembly initiation complex composed of NS2, E1, E2, NS3, NS4A, NS5A and the mature core protein. Part of the replication complex composed of NS2, NS3, NS4A, NS4B, NS5A and the RNA-directed RNA polymerase embedded in an ER-derived membranous web. Interacts with host GRB2. Interacts with host BIN1. Interacts with host PIK3R1. Interacts with host SRCAP. Interacts with host FKBP8. Interacts (via C-terminus) with host VAPB (via MSP domain). Interacts with host EIF2AK2/PKR; this interaction leads to disruption of EIF2AK2 dimerization by NS5A and probably allows the virus to evade the innate immune response. Interacts (via N-terminus) with host PACSIN2 (via N-terminus); this interaction attenuates protein kinase C alpha-mediated phosphorylation of PACSIN2 by disrupting the interaction between PACSIN2 and PRKCA. Interacts (via N-terminus) with host SRC kinase (via SH2 domain). Interacts with most Src-family kinases. Interacts with host IFI27 and SKP2; promotes the ubiquitin-mediated proteasomal degradation of NS5A. Interacts with host GPS2. Interacts with host TNFRSF21; this interaction allows the modulation by the virus of JNK, p38 MAPK, STAT3, and Akt signaling pathways in a DR6-dependent manner. Interacts (via N-terminus) with host CIDEB (via N-terminus); this interaction seems to regulate the association of HCV particles with APOE. Interacts with host CHKA/Choline Kinase-alpha; CHKA bridges host PI4KA and NS5A and potentiates NS5A-stimulated PI4KA activity, which then facilitates the targeting of the ternary complex to the ER for viral replication. Interacts with host SPSB2 (via C-terminus); this interaction targets NS5A for ubiquitination and degradation. Interacts with host RAB18; this interaction may promote the association of NS5A and other replicase components with lipid droplets. Interacts (via region D2) with host PPIA/CYPA; the interaction stimulates RNA-binding ability of NS5A and is dependent on the peptidyl-prolyl cis-trans isomerase activity of PPIA/CYPA. Interacts with host TRIM14; this interaction induces the degradation of NS5A. In terms of assembly, homooligomer. Interacts with non-structural protein 5A. Interacts with host VAPB. Interacts with host PRK2/PKN2. Interacts with host HNRNPA1 and SEPT6; these interactions facilitate viral replication. Part of the replication complex composed of NS2, NS3, NS4A, NS4B, NS5A and the RNA-directed RNA polymerase. Zn(2+) is required as a cofactor. Requires Mg(2+) as cofactor. Post-translationally, specific enzymatic cleavages in vivo yield mature proteins. The structural proteins, core, E1, E2 and p7 are produced by proteolytic processing by host signal peptidases. The core protein precursor is synthesized as a 23 kDa, which is retained in the ER membrane through the hydrophobic signal peptide. Cleavage by the signal peptidase releases the 21 kDa mature core protein. The cleavage of the core protein precursor occurs between aminoacids 176 and 188 but the exact cleavage site is not known. Some degraded forms of the core protein appear as well during the course of infection. The other proteins (p7, NS2, NS3, NS4A, NS4B, NS5A and NS5B) are cleaved by the viral proteases. Autoprocessing between NS2 and NS3 is mediated by the NS2 cysteine protease catalytic domain and regulated by the NS3 N-terminal domain. Phosphorylated by host PKC and PKA. In terms of processing, ubiquitinated; mediated by UBE3A and leading to core protein subsequent proteasomal degradation. Post-translationally, highly N-glycosylated. Palmitoylation is required for NS2/3 autoprocessing and E2 recruitment to membranes. In terms of processing, palmitoylated. This modification may play a role in its polymerization or in protein-protein interactions. Post-translationally, phosphorylated on serines in a basal form termed p56. p58 is a hyperphosphorylated form of p56. p56 and p58 coexist in the cell in roughly equivalent amounts. Hyperphosphorylation is dependent on the presence of NS4A. Host CSNK1A1/CKI-alpha or RPS6KB1 kinases may be responsible for NS5A phosphorylation. Tyrosine phosphorylation is essential for the interaction with host SRC. In terms of processing, ubiquitinated. Ubiquitination, most probably at Lys-2350, mediated by host IFI27 and SKP2 leads to proteasomal degradation, restricting viral infection. Ubiquitination by host TRIM22 leads to interruption of viral replication. Post-translationally, the N-terminus is phosphorylated by host PRK2/PKN2.

The protein resides in the host endoplasmic reticulum membrane. The protein localises to the host mitochondrion membrane. Its subcellular location is the virion. It localises to the host cytoplasm. It is found in the host nucleus. The protein resides in the host lipid droplet. The protein localises to the virion membrane. Its subcellular location is the host mitochondrion. It localises to the host cell membrane. It is found in the host perinuclear region. The enzyme catalyses Hydrolysis of four peptide bonds in the viral precursor polyprotein, commonly with Asp or Glu in the P6 position, Cys or Thr in P1 and Ser or Ala in P1'.. It carries out the reaction a ribonucleoside 5'-triphosphate + H2O = a ribonucleoside 5'-diphosphate + phosphate + H(+). It catalyses the reaction ATP + H2O = ADP + phosphate + H(+). The catalysed reaction is RNA(n) + a ribonucleoside 5'-triphosphate = RNA(n+1) + diphosphate. Inhibited by the antiviral drug hexamethylene amiloride. Inhibition by amantadine appears to be genotype-dependent. Also inhibited by long-alkyl-chain iminosugar derivatives. Its activity is regulated as follows. Activity is up-regulated by PRK2/PKN2-mediated phosphorylation. Its function is as follows. Packages viral RNA to form a viral nucleocapsid, and promotes virion budding. Participates in the viral particle production as a result of its interaction with the non-structural protein 5A. Binds RNA and may function as a RNA chaperone to induce the RNA structural rearrangements taking place during virus replication. Modulates viral translation initiation by interacting with viral IRES and 40S ribosomal subunit. Affects various cell signaling pathways, host immunity and lipid metabolism. Prevents the establishment of cellular antiviral state by blocking the interferon-alpha/beta (IFN-alpha/beta) and IFN-gamma signaling pathways and by blocking the formation of phosphorylated STAT1 and promoting ubiquitin-mediated proteasome-dependent degradation of STAT1. Activates STAT3 leading to cellular transformation. Regulates the activity of cellular genes, including c-myc and c-fos. May repress the promoter of p53, and sequester CREB3 and SP110 isoform 3/Sp110b in the cytoplasm. Represses cell cycle negative regulating factor CDKN1A, thereby interrupting an important check point of normal cell cycle regulation. Targets transcription factors involved in the regulation of inflammatory responses and in the immune response: suppresses TNF-induced NF-kappa-B activation, and activates AP-1. Binds to dendritic cells (DCs) via C1QR1, resulting in down-regulation of T-lymphocytes proliferation. Alters lipid metabolism by interacting with hepatocellular proteins involved in lipid accumulation and storage. Induces up-regulation of FAS promoter activity, and thereby contributes to the increased triglyceride accumulation in hepatocytes (steatosis). Forms a heterodimer with envelope glycoprotein E2, which mediates virus attachment to the host cell, virion internalization through clathrin-dependent endocytosis and fusion with host membrane. Fusion with the host cell is most likely mediated by both E1 and E2, through conformational rearrangements of the heterodimer required for fusion rather than a classical class II fusion mechanism. E1/E2 heterodimer binds host apolipoproteins such as APOB and ApoE thereby forming a lipo-viro-particle (LVP). APOE associated to the LVP allows the initial virus attachment to cell surface receptors such as the heparan sulfate proteoglycans (HSPGs), syndecan-1 (SDC1), syndecan-1 (SDC2), the low-density lipoprotein receptor (LDLR) and scavenger receptor class B type I (SCARB1). The cholesterol transfer activity of SCARB1 allows E2 exposure and binding of E2 to SCARB1 and the tetraspanin CD81. E1/E2 heterodimer binding on CD81 activates the epithelial growth factor receptor (EGFR) signaling pathway. Diffusion of the complex E1-E2-EGFR-SCARB1-CD81 to the cell lateral membrane allows further interaction with Claudin 1 (CLDN1) and occludin (OCLN) to finally trigger HCV entry. Functionally, forms a heterodimer with envelope glycoprotein E1, which mediates virus attachment to the host cell, virion internalization through clathrin-dependent endocytosis and fusion with host membrane. Fusion with the host cell is most likely mediated by both E1 and E2, through conformational rearrangements of the heterodimer required for fusion rather than a classical class II fusion mechanism. The interaction between envelope glycoprotein E2 and host apolipoprotein E/APOE allows the proper assembly, maturation and infectivity of the viral particles. This interaction is probably promoted via the up-regulation of cellular autophagy by the virus. E1/E2 heterodimer binds host apolipoproteins such as APOB and APOE thereby forming a lipo-viro-particle (LVP). APOE associated to the LVP allows the initial virus attachment to cell surface receptors such as the heparan sulfate proteoglycans (HSPGs), syndecan-1 (SDC1), syndecan-1 (SDC2), the low-density lipoprotein receptor (LDLR) and scavenger receptor class B type I (SCARB1). The cholesterol transfer activity of SCARB1 allows E2 exposure and binding of E2 to SCARB1 and the tetraspanin CD81. E1/E2 heterodimer binding on CD81 activates the epithelial growth factor receptor (EGFR) signaling pathway. Diffusion of the complex E1-E2-EGFR-SCARB1-CD81 to the cell lateral membrane allows further interaction with Claudin 1 (CLDN1) and occludin (OCLN) to finally trigger HCV entry. Inhibits host EIF2AK2/PKR activation, preventing the establishment of an antiviral state. Viral ligand for CD209/DC-SIGN and CLEC4M/DC-SIGNR, which are respectively found on dendritic cells (DCs), and on liver sinusoidal endothelial cells and macrophage-like cells of lymph node sinuses. These interactions allow the capture of circulating HCV particles by these cells and subsequent facilitated transmission to permissive cells such as hepatocytes and lymphocyte subpopulations. The interaction between E2 and host amino acid transporter complex formed by SLC3A2 and SLC7A5/LAT1 may facilitate viral entry into host cell. In terms of biological role, ion channel protein that acts as a viroporin and plays an essential role in the assembly, envelopment and secretion of viral particles. Regulates the host cell secretory pathway, which induces the intracellular retention of viral glycoproteins and favors assembly of viral particles. Creates a pore in acidic organelles and releases Ca(2+) and H(+) in the cytoplasm of infected cells, leading to a productive viral infection. High levels of cytoplasmic Ca(2+) may trigger membrane trafficking and transport of viral ER-associated proteins to viroplasms, sites of viral genome replication. This ionic imbalance induces the assembly of the inflammasome complex, which triggers the maturation of pro-IL-1beta into IL-1beta through the action of caspase-1. Targets also host mitochondria and induces mitochondrial depolarization. In addition of its role as a viroporin, acts as a lipid raft adhesion factor. Its function is as follows. Cysteine protease required for the proteolytic auto-cleavage between the non-structural proteins NS2 and NS3. The N-terminus of NS3 is required for the function of NS2 protease (active region NS2-3). Promotes the initiation of viral particle assembly by mediating the interaction between structural and non-structural proteins. Displays three enzymatic activities: serine protease with a chymotrypsin-like fold, NTPase and RNA helicase. NS3 serine protease, in association with NS4A, is responsible for the cleavages of NS3-NS4A, NS4A-NS4B, NS4B-NS5A and NS5A-NS5B. The NS3/NS4A complex prevents phosphorylation of host IRF3, thus preventing the establishment of dsRNA induced antiviral state. The NS3/NS4A complex induces host amino acid transporter component SLC3A2, thus contributing to HCV propagation. NS3 RNA helicase binds to RNA and unwinds both dsDNA and dsRNA in the 3' to 5' direction, and likely resolves RNA complicated stable secondary structures in the template strand. Binds a single ATP and catalyzes the unzipping of a single base pair of dsRNA. Inhibits host antiviral proteins TBK1 and IRF3 thereby preventing the establishment of an antiviral state. Cleaves host MAVS/CARDIF thereby preventing the establishment of an antiviral state. Cleaves host TICAM1/TRIF, thereby disrupting TLR3 signaling and preventing the establishment of an antiviral state. Functionally, peptide cofactor which forms a non-covalent complex with the N-terminal of NS3 serine protease. The NS3/NS4A complex prevents phosphorylation of host IRF3, thus preventing the establishment of dsRNA induced antiviral state. The NS3/NS4A complex induces host amino acid transporter component SLC3A2, thus contributing to HCV propagation. In terms of biological role, induces a specific membrane alteration that serves as a scaffold for the virus replication complex. This membrane alteration gives rise to the so-called ER-derived membranous web that contains the replication complex. NS4B self-interaction contributes to its function in membranous web formation. Promotes host TRIF protein degradation in a CASP8-dependent manner thereby inhibiting host TLR3-mediated interferon signaling. Disrupts the interaction between STING and TBK1 contributing to the inhibition of interferon signaling. Its function is as follows. Phosphorylated protein that is indispensable for viral replication and assembly. Both hypo- and hyperphosphorylated states are required for the viral life cycle. The hyperphosphorylated form of NS5A is an inhibitor of viral replication. Involved in RNA-binding and especially in binding to the viral genome. Zinc is essential for RNA-binding. Participates in the viral particle production as a result of its interaction with the mature viral core protein. Its interaction with host VAPB may target the viral replication complex to vesicles. Down-regulates viral IRES translation initiation. Mediates interferon resistance, presumably by interacting with and inhibiting host EIF2AK2/PKR. Prevents BIN1-induced apoptosis. Acts as a transcriptional activator of some host genes important for viral replication when localized in the nucleus. Via the interaction with host PACSIN2, modulates lipid droplet formation in order to promote virion assembly. Modulates TNFRSF21/DR6 signaling pathway for viral propagation. RNA-dependent RNA polymerase that performs primer-template recognition and RNA synthesis during viral replication. Initiates RNA transcription/replication at a flavin adenine dinucleotide (FAD), resulting in a 5'- FAD cap on viral RNAs. In this way, recognition of viral 5' RNA by host pattern recognition receptors can be bypassed, thereby evading activation of antiviral pathways. The protein is Genome polyprotein of Homo sapiens (Human).